The primary structure comprises 160 residues: Transcription elongation factor GreA 2 (160 aa).

The stretch at 9-73 forms a coiled coil; that stretch reads MTEEGKVKLE…RIKTVEHMLQ (65 aa).

Belongs to the GreA/GreB family.

Its function is as follows. Necessary for efficient RNA polymerase transcription elongation past template-encoded arresting sites. The arresting sites in DNA have the property of trapping a certain fraction of elongating RNA polymerases that pass through, resulting in locked ternary complexes. Cleavage of the nascent transcript by cleavage factors such as GreA or GreB allows the resumption of elongation from the new 3'terminus. GreA releases sequences of 2 to 3 nucleotides. The polypeptide is Transcription elongation factor GreA 2 (Lactiplantibacillus plantarum (strain ATCC BAA-793 / NCIMB 8826 / WCFS1) (Lactobacillus plantarum)).